The following is a 782-amino-acid chain: Anoctamin-9 (782 aa).

Topologically, residues 1–198 are cytoplasmic; it reads MQGEESLRIL…LYFVWLGWYT (198 aa). A helical membrane pass occupies residues 199 to 219; sequence YMLVPAALTGLLVFLSGFSLF. Residues 220-264 lie on the Extracellular side of the membrane; sequence EASQISKEICEAHDILMCPLGDHSRRYQRLSETCTFAKLTHLFDN. Residue serine 250 is modified to Phosphoserine; by PKA. Residues 265–285 form a helical membrane-spanning segment; it reads DGTVVFAIFMALWATVFLEIW. The Cytoplasmic portion of the chain corresponds to 286–331; it reads KRQRARVVLHWDLYVWDEEQEEMALQLINCPDYKLRPYQHSYLRST. The chain crosses the membrane as a helical span at residues 332 to 352; that stretch reads VILVLTLLMICLMIGMAHVLV. The Extracellular portion of the chain corresponds to 353-373; sequence VYRVLASALFSSSAVPFLEEQ. The helical transmembrane segment at 374 to 394 threads the bilayer; it reads VTTAVVVTGALVHYVTIIIMT. Over 395 to 423 the chain is Cytoplasmic; that stretch reads KINRCVALKLCDFEMPRTFSERESRFTIR. The helical transmembrane segment at 424 to 444 threads the bilayer; sequence FFTLQFFTHFSSLIYIAFILG. Over 445–552 the chain is Extracellular; that stretch reads RINGHPGKST…EMMIQYGFTT (108 aa). The helical transmembrane segment at 553–573 threads the bilayer; that stretch reads IFVAAFPLAPLLALFSNLVEI. The Cytoplasmic portion of the chain corresponds to 574–604; it reads RLDAIKMVWLQRRLVPRKAKDIGTWLQVLET. Residues 605 to 625 form a helical membrane-spanning segment; the sequence is IGVLAVIANGMVIAFTSEFIP. Residues 626–703 are Extracellular-facing; the sequence is RVVYKYRYSP…QFWFLLAIRL (78 aa). N-linked (GlcNAc...) asparagine glycans are attached at residues asparagine 641, asparagine 652, asparagine 674, and asparagine 690. The chain crosses the membrane as a helical span at residues 704 to 724; sequence AFVILFEHVALCIKLIAAWFV. Residues 725–782 are Cytoplasmic-facing; it reads PDIPQSVKNKVLEVKYQRLREKMWHGRQRLGGVGAGSRPPMPAHPTPASIFSARSTDV. Positions 756–782 are disordered; that stretch reads GVGAGSRPPMPAHPTPASIFSARSTDV.

Belongs to the anoctamin family. In terms of processing, phosphorylated on serine residues by cAMP-dependent protein kinase A (PKA) which is essential for activation of its cation channel activity. As to expression, expressed in the kidney. Expressed in the olfactory epithelium.

It is found in the cell membrane. Its subcellular location is the endoplasmic reticulum. It catalyses the reaction a 1,2-diacyl-sn-glycero-3-phospho-L-serine(in) = a 1,2-diacyl-sn-glycero-3-phospho-L-serine(out). It carries out the reaction a beta-D-galactosyl-(1&lt;-&gt;1')-N-acylsphing-4-enine(out) = a beta-D-galactosyl-(1&lt;-&gt;1')-N-acylsphing-4-enine(in). The catalysed reaction is a 1,2-diacyl-sn-glycero-3-phosphocholine(in) = a 1,2-diacyl-sn-glycero-3-phosphocholine(out). The enzyme catalyses Ca(2+)(in) = Ca(2+)(out). It catalyses the reaction Na(+)(in) = Na(+)(out). It carries out the reaction K(+)(in) = K(+)(out). With respect to regulation, cation channel activity is activated via phosphorylation on serine residues by cAMP-dependent protein kinase A (PKA). Functionally, PKA-activated nonselective cation channel. Discriminates poorly among cations but is more permeable to Ca(2+) ions than to monovalent cations. Acts as a calcium-activated calcium permeable channel which may operate as a endoplasmic reticulum (ER) Ca(2+)-leak channel, reducing the loading of the ER Ca(2+) store. Regulates intracellular Ca2+ signals, ion channel activity, and cytokine release in the renal tissue. Plays an important role in olfaction, amplifying cAMP-evoked cyclic nucleotide-gated (CNG) channel currents in the olfactory sensory neurons. Has calcium-dependent phospholipid scramblase activity; scrambles phosphatidylserine, phosphatidylcholine and galactosylceramide. Does not exhibit calcium-activated chloride channel (CaCC) activity. Can inhibit the activity of ANO1. This chain is Anoctamin-9 (ANO9), found in Homo sapiens (Human).